The chain runs to 286 residues: Energy-coupling factor transporter ATP-binding protein EcfA2 (286 aa).

The ABC transporter domain maps to 3-246; it reads IQFNQVSYIY…KTQLLKWHIE (244 aa). 40 to 47 is a binding site for ATP; it reads GQTGSGKS.

The protein belongs to the ABC transporter superfamily. Energy-coupling factor EcfA family. As to quaternary structure, forms a stable energy-coupling factor (ECF) transporter complex composed of 2 membrane-embedded substrate-binding proteins (S component), 2 ATP-binding proteins (A component) and 2 transmembrane proteins (T component).

It is found in the cell membrane. Functionally, ATP-binding (A) component of a common energy-coupling factor (ECF) ABC-transporter complex. Unlike classic ABC transporters this ECF transporter provides the energy necessary to transport a number of different substrates. In Staphylococcus epidermidis (strain ATCC 35984 / DSM 28319 / BCRC 17069 / CCUG 31568 / BM 3577 / RP62A), this protein is Energy-coupling factor transporter ATP-binding protein EcfA2.